We begin with the raw amino-acid sequence, 540 residues long: Synaptotagmin-3 (540 aa).

The chain crosses the membrane as a helical span at residues 9 to 29 (GIIGFVIGIPIGLILGFFVLI). The SMP-LTD domain occupies 67-249 (DYERVDWFNK…WPQVLEIPIL (183 aa)). The tract at residues 227 to 509 (QETIKRQVSS…ELGHVDINLD (283 aa)) is phospholipid binding. C2 domains lie at 240–363 (WPQV…EFNL) and 401–521 (RKES…NQKY). Residues aspartate 277, aspartate 283, aspartate 333, aspartate 335, and aspartate 341 each contribute to the Ca(2+) site.

Belongs to the synaptotagmin family. It depends on Ca(2+) as a cofactor.

It localises to the membrane. May be involved in membrane trafficking. The sequence is that of Synaptotagmin-3 (SYT3) from Arabidopsis thaliana (Mouse-ear cress).